Reading from the N-terminus, the 232-residue chain is Phosphatidylserine decarboxylase proenzyme (232 aa).

Ser190 acts as the Schiff-base intermediate with substrate; via pyruvic acid in catalysis. Ser190 is modified (pyruvic acid (Ser); by autocatalysis).

The protein belongs to the phosphatidylserine decarboxylase family. PSD-A subfamily. As to quaternary structure, heterodimer of a large membrane-associated beta subunit and a small pyruvoyl-containing alpha subunit. Pyruvate serves as cofactor. Is synthesized initially as an inactive proenzyme. Formation of the active enzyme involves a self-maturation process in which the active site pyruvoyl group is generated from an internal serine residue via an autocatalytic post-translational modification. Two non-identical subunits are generated from the proenzyme in this reaction, and the pyruvate is formed at the N-terminus of the alpha chain, which is derived from the carboxyl end of the proenzyme. The post-translation cleavage follows an unusual pathway, termed non-hydrolytic serinolysis, in which the side chain hydroxyl group of the serine supplies its oxygen atom to form the C-terminus of the beta chain, while the remainder of the serine residue undergoes an oxidative deamination to produce ammonia and the pyruvoyl prosthetic group on the alpha chain.

It localises to the cell membrane. The catalysed reaction is a 1,2-diacyl-sn-glycero-3-phospho-L-serine + H(+) = a 1,2-diacyl-sn-glycero-3-phosphoethanolamine + CO2. It participates in phospholipid metabolism; phosphatidylethanolamine biosynthesis; phosphatidylethanolamine from CDP-diacylglycerol: step 2/2. Its function is as follows. Catalyzes the formation of phosphatidylethanolamine (PtdEtn) from phosphatidylserine (PtdSer). The protein is Phosphatidylserine decarboxylase proenzyme of Rhodopseudomonas palustris (strain BisB18).